The following is a 308-amino-acid chain: MEMEKNQHISSLDIPVIDLSNPDEELVASAVVKASQEWGIFQVVNHGIPTELILRLLQVGMEFFELPETEKEAVAKPEDSLDIEGYRTKYQKDLEGRNAWVDHLFHRIWPPSRVNHKFWPKNPPEYIEVNEEYASHIKKLSEKIMEWLSEGLGLRHEALKEGLGGETIEYLMKINYYPPCPDPELVVGAPDHTDVNGITLLVANEALGLQAFKDNQWIDAEYTTSGIIVIIGDQFLRMSNGKYKSVEHRAKMDKEKTRISWPVFVESSLDQVFGPLPELITGDENVPKFKPYVYKDYKFRKLKKLLLD.

In terms of domain architecture, Fe2OG dioxygenase spans 167 to 267 (TIEYLMKINY…RISWPVFVES (101 aa)). A 2-oxoglutarate-binding site is contributed by 175–177 (NYY). Histidine 192, aspartate 194, and histidine 248 together coordinate Fe cation. Residue 258–260 (RIS) participates in 2-oxoglutarate binding.

This sequence belongs to the iron/ascorbate-dependent oxidoreductase family. It depends on Fe(2+) as a cofactor. As to expression, widely expressed at low levels.

It carries out the reaction a (2R,3R)-dihydroflavonol + 2-oxoglutarate + O2 = a flavonol + succinate + CO2 + H2O. It participates in secondary metabolite biosynthesis; flavonoid biosynthesis. In terms of biological role, catalyzes the formation of flavonols from dihydroflavonols. Possesses low activity in vitro towards dihydrokaempferol and dihydroquercetin producing kaempferol and quercitin, respectively. The polypeptide is Flavonol synthase 3 (Arabidopsis thaliana (Mouse-ear cress)).